The following is a 331-amino-acid chain: Tungstate uptake system ATP-binding protein TupC (331 aa).

Residues 2–230 (IEISNLFFNY…NQGVKFCNFI (229 aa)) enclose the ABC transporter domain. Residue 34–41 (GANGSGKS) participates in ATP binding.

The protein belongs to the ABC transporter superfamily. In terms of assembly, the complex is composed of two ATP-binding proteins (TupC), two transmembrane proteins (TupB) and a solute-binding protein (TupA).

The catalysed reaction is tungstate(in) + ATP + H2O = tungstate(out) + ADP + phosphate + H(+). Its function is as follows. Part of an ABC transporter complex involved in ultra-high affinity tungstate uptake. Probably responsible for energy coupling to the transport system. The chain is Tungstate uptake system ATP-binding protein TupC from Campylobacter jejuni subsp. jejuni serotype O:2 (strain ATCC 700819 / NCTC 11168).